We begin with the raw amino-acid sequence, 870 residues long: DNA mismatch repair protein MutS (870 aa).

620-627 is an ATP binding site; it reads GPNMAGKS.

This sequence belongs to the DNA mismatch repair MutS family.

In terms of biological role, this protein is involved in the repair of mismatches in DNA. It is possible that it carries out the mismatch recognition step. This protein has a weak ATPase activity. The protein is DNA mismatch repair protein MutS of Acetivibrio thermocellus (strain ATCC 27405 / DSM 1237 / JCM 9322 / NBRC 103400 / NCIMB 10682 / NRRL B-4536 / VPI 7372) (Clostridium thermocellum).